A 494-amino-acid chain; its full sequence is Ectonucleoside triphosphate diphosphohydrolase 8 (494 aa).

Residues 1-8 (MRLSWKER) lie on the Cytoplasmic side of the membrane. The helical transmembrane segment at 9-29 (VFMVLLGVAAASGLTMLILIL) threads the bilayer. The Extracellular portion of the chain corresponds to 30–465 (VKATNVLLPA…LTQWRAQSYS (436 aa)). Residues C78 and C102 are joined by a disulfide bond. E168 serves as the catalytic Proton acceptor. Residues C245 and C291 are joined by a disulfide bond. N299 and N303 each carry an N-linked (GlcNAc...) asparagine glycan. A disulfide bond links C328 and C334. Residue N362 is glycosylated (N-linked (GlcNAc...) asparagine). A disulfide bond links C380 and C402. The helical transmembrane segment at 466–486 (IWIAGVVFAVLTLVAILGAAA) threads the bilayer. The Cytoplasmic segment spans residues 487 to 494 (VQLFWTQD).

This sequence belongs to the GDA1/CD39 NTPase family. Ca(2+) is required as a cofactor. Requires Mg(2+) as cofactor. N-glycosylated. As to expression, present in liver, and at lower level in jejunum and kidney. Limited to the canalicular domain of hepatocytes (at protein level).

The protein localises to the cell membrane. It carries out the reaction a ribonucleoside 5'-triphosphate + 2 H2O = a ribonucleoside 5'-phosphate + 2 phosphate + 2 H(+). In terms of biological role, canalicular ectonucleoside NTPDase responsible for the main hepatic NTPDase activity. Ectonucleoside NTPDases catalyze the hydrolysis of gamma- and beta-phosphate residues of nucleotides, playing a central role in concentration of extracellular nucleotides. Has activity toward ATP, ADP, UTP and UDP, but not toward AMP. The polypeptide is Ectonucleoside triphosphate diphosphohydrolase 8 (Entpd8) (Rattus norvegicus (Rat)).